A 166-amino-acid polypeptide reads, in one-letter code: Large ribosomal subunit protein uL10 (166 aa).

Belongs to the universal ribosomal protein uL10 family. As to quaternary structure, part of the ribosomal stalk of the 50S ribosomal subunit. The N-terminus interacts with L11 and the large rRNA to form the base of the stalk. The C-terminus forms an elongated spine to which L12 dimers bind in a sequential fashion forming a multimeric L10(L12)X complex.

Functionally, forms part of the ribosomal stalk, playing a central role in the interaction of the ribosome with GTP-bound translation factors. The chain is Large ribosomal subunit protein uL10 from Shewanella amazonensis (strain ATCC BAA-1098 / SB2B).